The chain runs to 391 residues: Elongation factor Tu (391 aa).

Positions 10–201 (KPHVNIGTVG…AVDEYIPTPE (192 aa)) constitute a tr-type G domain. Positions 19–26 (GHVDHGKT) are G1. GTP is bound at residue 19–26 (GHVDHGKT). Residue T26 participates in Mg(2+) binding. Residues 55 to 59 (GITIS) form a G2 region. The interval 76 to 79 (DCPG) is G3. GTP is bound by residues 76 to 80 (DCPGH) and 131 to 134 (NKVD). A G4 region spans residues 131–134 (NKVD). A G5 region spans residues 169-171 (SAL).

It belongs to the TRAFAC class translation factor GTPase superfamily. Classic translation factor GTPase family. EF-Tu/EF-1A subfamily. Monomer.

It localises to the cytoplasm. The catalysed reaction is GTP + H2O = GDP + phosphate + H(+). Functionally, GTP hydrolase that promotes the GTP-dependent binding of aminoacyl-tRNA to the A-site of ribosomes during protein biosynthesis. This chain is Elongation factor Tu, found in Ruegeria sp. (strain TM1040) (Silicibacter sp.).